The sequence spans 232 residues: Lipoprotein-releasing system ATP-binding protein LolD 2 (232 aa).

In terms of domain architecture, ABC transporter spans 11–231 (VYLHDIKRQY…SLQDGVVVEL (221 aa)). 47–54 (APSGSGKS) contributes to the ATP binding site.

This sequence belongs to the ABC transporter superfamily. Lipoprotein translocase (TC 3.A.1.125) family. As to quaternary structure, the complex is composed of two ATP-binding proteins (LolD) and two transmembrane proteins (LolC and LolE).

The protein localises to the cell inner membrane. Part of the ABC transporter complex LolCDE involved in the translocation of mature outer membrane-directed lipoproteins, from the inner membrane to the periplasmic chaperone, LolA. Responsible for the formation of the LolA-lipoprotein complex in an ATP-dependent manner. The sequence is that of Lipoprotein-releasing system ATP-binding protein LolD 2 from Rhodopseudomonas palustris (strain ATCC BAA-98 / CGA009).